Reading from the N-terminus, the 140-residue chain is Nucleoside diphosphate kinase (140 aa).

6 residues coordinate ATP: K11, F59, R87, T93, R104, and N114. H117 acts as the Pros-phosphohistidine intermediate in catalysis.

The protein belongs to the NDK family. Homotetramer. The cofactor is Mg(2+).

The protein resides in the cytoplasm. The catalysed reaction is a 2'-deoxyribonucleoside 5'-diphosphate + ATP = a 2'-deoxyribonucleoside 5'-triphosphate + ADP. The enzyme catalyses a ribonucleoside 5'-diphosphate + ATP = a ribonucleoside 5'-triphosphate + ADP. Functionally, major role in the synthesis of nucleoside triphosphates other than ATP. The ATP gamma phosphate is transferred to the NDP beta phosphate via a ping-pong mechanism, using a phosphorylated active-site intermediate. The polypeptide is Nucleoside diphosphate kinase (Rhodopseudomonas palustris (strain BisA53)).